A 164-amino-acid chain; its full sequence is ATP synthase subunit b (164 aa).

Residues 10–30 (LLISQIVNFCLLAFLLNTFLY) form a helical membrane-spanning segment.

It belongs to the ATPase B chain family. In terms of assembly, F-type ATPases have 2 components, F(1) - the catalytic core - and F(0) - the membrane proton channel. F(1) has five subunits: alpha(3), beta(3), gamma(1), delta(1), epsilon(1). F(0) has three main subunits: a(1), b(2) and c(10-14). The alpha and beta chains form an alternating ring which encloses part of the gamma chain. F(1) is attached to F(0) by a central stalk formed by the gamma and epsilon chains, while a peripheral stalk is formed by the delta and b chains.

It is found in the cell membrane. Its function is as follows. F(1)F(0) ATP synthase produces ATP from ADP in the presence of a proton or sodium gradient. F-type ATPases consist of two structural domains, F(1) containing the extramembraneous catalytic core and F(0) containing the membrane proton channel, linked together by a central stalk and a peripheral stalk. During catalysis, ATP synthesis in the catalytic domain of F(1) is coupled via a rotary mechanism of the central stalk subunits to proton translocation. In terms of biological role, component of the F(0) channel, it forms part of the peripheral stalk, linking F(1) to F(0). The sequence is that of ATP synthase subunit b from Herpetosiphon aurantiacus (strain ATCC 23779 / DSM 785 / 114-95).